We begin with the raw amino-acid sequence, 122 residues long: Fluoride-specific ion channel FluC (122 aa).

Transmembrane regions (helical) follow at residues 4–24, 34–54, 66–86, and 95–115; these read LLIA…GTAI, IGTM…MTLL, LALV…EWET, and FWIG…AVWF. Residues glycine 74 and threonine 77 each contribute to the Na(+) site.

The protein belongs to the fluoride channel Fluc/FEX (TC 1.A.43) family.

Its subcellular location is the cell inner membrane. It carries out the reaction fluoride(in) = fluoride(out). With respect to regulation, na(+) is not transported, but it plays an essential structural role and its presence is essential for fluoride channel function. In terms of biological role, fluoride-specific ion channel. Important for reducing fluoride concentration in the cell, thus reducing its toxicity. The protein is Fluoride-specific ion channel FluC of Solibacter usitatus (strain Ellin6076).